The chain runs to 387 residues: MVAQEMAQEKNLQPWEYVYDLLMPAKIPPRKRTKYIYLALAVPPTMEFNKKISKGDTEDLELPVYPVAFNTRPGNNKADRIATRKDLLTRLGTYPTVGLYANDYDFTMLIKNLDFKSEFVPGYFPLAVLELHFERDITANPEDYGLKPIDGREWVFDPDGSYKVTSGSLFNIAKAEIVDPNSVTINLDKNSKEFNALNGYGVVQFYIDLNNAPWEAYAKAAEECESVGGIYRHDTNEGPSYCTLPLNKEANIKASEFILQLYDMIKSKIASEDFLKREMTFLAPGPKQIEDFLKNEMMYQPPGPKRIPVKPVIGKTFQEMVKVAEQEMAKVAEKRDLILGGEEKEPKQKSQEKLFNPFAIDYEMLTEEQQQQNETEEEEKNNTVKLS.

Residues 315–387 (KTFQEMVKVA…EEKNNTVKLS (73 aa)) adopt a coiled-coil conformation. Residues 365–387 (LTEEQQQQNETEEEEKNNTVKLS) form a disordered region.

The protein localises to the virion. This is Structural protein ORF387 from Acidianus convivator (ATV).